Reading from the N-terminus, the 48-residue chain is Light-harvesting polypeptide B-885 beta-2 chain (48 aa).

The Cytoplasmic segment spans residues 1–20 (AEDRKSLSGLTEQEAQEFGT). A helical membrane pass occupies residues 21–43 (LYTQGVAFVAVIAIVAHALVWAW). His37 serves as a coordination point for a bacteriochlorophyll. Over 44–48 (RPWLQ) the chain is Periplasmic.

It belongs to the antenna complex beta subunit family. As to quaternary structure, the core complex is formed by different alpha and beta chains, binding bacteriochlorophyll molecules, and arranged most probably in tetrameric structures disposed around the reaction center. The non-pigmented gamma chains may constitute additional components.

The protein localises to the cell inner membrane. Functionally, antenna complexes are light-harvesting systems, which transfer the excitation energy to the reaction centers. The chain is Light-harvesting polypeptide B-885 beta-2 chain from Rhodocyclus tenuis (Rhodospirillum tenue).